We begin with the raw amino-acid sequence, 343 residues long: 3-dehydroquinate synthase (343 aa).

NAD(+) is bound by residues 61 to 66 (SGEKYK), 95 to 96 (GV), 119 to 120 (TT), Lys132, Lys141, Asn142, and 159 to 162 (FLKT). Residues Glu174, His231, and His248 each contribute to the Zn(2+) site.

The protein belongs to the sugar phosphate cyclases superfamily. Dehydroquinate synthase family. Homodimer. The cofactor is NAD(+). It depends on Co(2+) as a cofactor. Requires Zn(2+) as cofactor.

The protein localises to the cytoplasm. It catalyses the reaction 7-phospho-2-dehydro-3-deoxy-D-arabino-heptonate = 3-dehydroquinate + phosphate. The protein operates within metabolic intermediate biosynthesis; chorismate biosynthesis; chorismate from D-erythrose 4-phosphate and phosphoenolpyruvate: step 2/7. Catalyzes the conversion of 3-deoxy-D-arabino-heptulosonate 7-phosphate (DAHP) to dehydroquinate (DHQ). This is 3-dehydroquinate synthase from Helicobacter pylori (strain ATCC 700392 / 26695) (Campylobacter pylori).